A 286-amino-acid polypeptide reads, in one-letter code: MWTPPRNDQQYLNWQWYSSILSSHAAMCGCPDAVAHFNHLASVLRAPQNPPPPGPQRNLPLRRLPALPAAPEAPGDRAPWPMAGGAEGEDGGAGGDADHGGAAGGPEDADLLDAVAAAETLLEIPAKKPTPRAIESLEAYKSLTRNTTHRNSHSIPGTSDVASLARKLFRECNNNQQLLTFFQQAARDPGGTPRCTTPAKKGSKKKAYFSPQSSSSDESPRGKTRSRRKAGRKAQRKRRRPSPSSSSSSCSNSESWESNSDSCSTKSKKSTKIKISTLPCYQGGGI.

2 disordered regions span residues 67–108 (LPAA…GPED) and 184–286 (QAAR…GGGI). Residues 222–241 (GKTRSRRKAGRKAQRKRRRP) show a composition bias toward basic residues. Residues 242–265 (SPSSSSSSCSNSESWESNSDSCST) are compositionally biased toward low complexity.

Post-translationally, phosphorylated at C-terminal serines.

The chain is Probable protein VP2 from Homo sapiens (Human).